Here is a 307-residue protein sequence, read N- to C-terminus: Taste receptor type 2 member 10 (307 aa).

At 1 to 6 the chain is on the extracellular side; sequence MLSVVE. The helical transmembrane segment at 7-27 threads the bilayer; it reads GILILVVISESVFGVLGNGFI. Topologically, residues 28–42 are cytoplasmic; the sequence is GLVNCIDCAKNKLST. A helical membrane pass occupies residues 43-63; it reads IGFILTGLAISRIFLIWIIIT. The Extracellular segment spans residues 64-100; that stretch reads DGFIQIFSPDVYASGNLIEYISYFWVITNQSSIWFAT. N-linked (GlcNAc...) asparagine glycosylation is present at Asn-92. Residues 101–121 traverse the membrane as a helical segment; that stretch reads SLSIFYFLKIANFSNYIFLWL. Topologically, residues 122–126 are cytoplasmic; that stretch reads KSRIN. The chain crosses the membrane as a helical span at residues 127–147; sequence RVLPLLMGFLLISCLLNFAYI. Topologically, residues 148–179 are extracellular; that stretch reads VKILNDLKMKNDTVWRLNMYKSEYFIKQLLLN. Residue Asn-158 is glycosylated (N-linked (GlcNAc...) asparagine). A helical membrane pass occupies residues 180-200; the sequence is LGVIFFFTLSLITSVLLIISL. The Cytoplasmic portion of the chain corresponds to 201 to 227; that stretch reads WRHNRQMQSNVTGLRDSITEAHVKAMK. The helical transmembrane segment at 228–248 threads the bilayer; sequence VLISFIILFILYFIGIAIEIS. Residues 249–257 are Extracellular-facing; it reads YFTVPENKL. The helical transmembrane segment at 258-278 threads the bilayer; it reads LLIFGMTTTAIYPWGHSFILI. Topologically, residues 279–307 are cytoplasmic; sequence LGNSKLKQASLRVLQQLKCCEERKNLRAT.

Belongs to the G-protein coupled receptor T2R family.

Its subcellular location is the membrane. Its function is as follows. Receptor that may play a role in the perception of bitterness and is gustducin-linked. May play a role in sensing the chemical composition of the gastrointestinal content. The activity of this receptor may stimulate alpha gustducin, mediate PLC-beta-2 activation and lead to the gating of TRPM5. The protein is Taste receptor type 2 member 10 (TAS2R10) of Papio hamadryas (Hamadryas baboon).